A 226-amino-acid polypeptide reads, in one-letter code: Probable transcriptional regulator RABBIT EARS (226 aa).

Residues Y55–H77 form a C2H2-type zinc finger. Residues D80–C102 form a disordered region. Polar residues predominate over residues K85–A97. The EAR-like (transcriptional repression) signature appears at L212–L216.

In terms of tissue distribution, strongly expressed in inflorescences and flowers, and weakly in siliques, seedlings and roots. In flowers, it is expressed in petal primordia and their precursor cells. Also expressed in the lateral root caps and the basal cells of lateral roots.

The protein localises to the nucleus. Functionally, probable transcriptional regulator essential for petal development. Required for the early development of the organ primordia of the second whorl. Acts downstream of AP1 and PTL. This Arabidopsis thaliana (Mouse-ear cress) protein is Probable transcriptional regulator RABBIT EARS (RBE).